Here is a 404-residue protein sequence, read N- to C-terminus: Argininosuccinate synthase (404 aa).

ATP-binding positions include 12-20 and Ala39; that span reads AYSGGLDTS. Residues Tyr91 and Ser96 each contribute to the L-citrulline site. Position 121 (Gly121) interacts with ATP. Thr123, Asn127, and Asp128 together coordinate L-aspartate. Asn127 is a binding site for L-citrulline. 5 residues coordinate L-citrulline: Arg131, Ser180, Ser189, Glu265, and Tyr277.

It belongs to the argininosuccinate synthase family. Type 1 subfamily. As to quaternary structure, homotetramer.

It is found in the cytoplasm. The enzyme catalyses L-citrulline + L-aspartate + ATP = 2-(N(omega)-L-arginino)succinate + AMP + diphosphate + H(+). It functions in the pathway amino-acid biosynthesis; L-arginine biosynthesis; L-arginine from L-ornithine and carbamoyl phosphate: step 2/3. The protein is Argininosuccinate synthase of Vibrio campbellii (strain ATCC BAA-1116).